Reading from the N-terminus, the 589-residue chain is Class I diterpene synthase 2, chloroplastic (589 aa).

The Mg(2+) site is built by Asp328, Asp332, Asn472, Thr476, and Glu480. The DDXXD motif signature appears at 328 to 332 (DDFFD).

This sequence belongs to the terpene synthase family. Mg(2+) is required as a cofactor. Mostly expressed in trichomes of leaves and fruits.

Its subcellular location is the plastid. The protein localises to the chloroplast. It catalyses the reaction 9alpha-copalyl diphosphate + H2O = (13S)-vitexifolin A + diphosphate. It carries out the reaction peregrinol diphosphate = (13R)-9,13-epoxylabd-14-ene + diphosphate. The catalysed reaction is peregrinol diphosphate + H2O = viteagnusin D + diphosphate. It functions in the pathway secondary metabolite biosynthesis; terpenoid biosynthesis. In terms of biological role, involved in the biosynthesis of labdane-type diterpenoid including cleroda-dienols, and peregrinol lactones and furan derivatives, dopaminergic diterpenoids that can bind to dopamine receptors in the human pituitary gland, have probably ability to lower prolactin levels, and are used to treat menstrual cycle disorders (e.g. premenstrual syndrome and mastodynia). Terpene synthase the catalyzes the conversion of peregrinol diphosphate to viteagnusin D and 9,13(R)-epoxy-labd-14-ene, and of syn-copalyl diphosophate to vitexifolin A. The protein is Class I diterpene synthase 2, chloroplastic of Vitex agnus-castus (Chaste tree).